The following is a 109-amino-acid chain: UPF0102 protein Suden_1901 (109 aa).

Belongs to the UPF0102 family.

In Sulfurimonas denitrificans (strain ATCC 33889 / DSM 1251) (Thiomicrospira denitrificans (strain ATCC 33889 / DSM 1251)), this protein is UPF0102 protein Suden_1901.